The chain runs to 1120 residues: Terminal uridylyltransferase 1 (1120 aa).

Disordered stretches follow at residues 1-156 (MSKY…SAVE) and 196-221 (AALINGDPGPLSSAVSSSSSGSPHTP). Polar residues predominate over residues 7–16 (LFNQGTKDGT). Residues 17–59 (NASSGSEANSANITSSSAPASSTNTSSPTSSESAVVSPPASTS) are compositionally biased toward low complexity. A compositionally biased stretch (basic residues) spans 60–70 (PRRRLIHRRHG). The segment covering 90–103 (NEEKHENFISDSVH) has biased composition (basic and acidic residues). Residues 118-128 (LTTSGSETVMS) show a composition bias toward polar residues. 2 stretches are compositionally biased toward low complexity: residues 134-154 (AFEAPSPPTASASPPLESTSA) and 207-217 (SSAVSSSSSGS). The C2H2-type; atypical zinc-finger motif lies at 222–253 (PRLFTCDMCLQYVSTSYEALEQHALDQHGDAL). Residues Cys-227, Cys-230, His-244, and His-249 each coordinate Zn(2+). Residues Ser-330 and 341–344 (SDID) each bind UTP. 2 residues coordinate Mg(2+): Asp-342 and Asp-344. Position 390 (Arg-390) interacts with RNA. Position 548 (Asp-548) interacts with Mg(2+). Residues 555–559 (GIRNS), Lys-580, Lys-584, and 598–599 (SY) each bind UTP. Residues 659-697 (GELLLGFFYYYAFEFDWVNHVVSLNRPGITTKASLGWDV) enclose the PAP-associated domain. Positions 750–1120 (GMMASSASAA…ARRVLRLLFR (371 aa)) are important for catalytic activity and RNA binding. The Nucleotide recognition motif (NRM) signature appears at 773 to 782 (IEDPYEENLN). An involved in oligomerization region spans residues 800–900 (YRGLLSLLKD…LLSDLEAAFL (101 aa)). The disordered stretch occupies residues 1047-1076 (PSTTTQGEDPLASGTCEQGGVSPSLPTGAP).

It belongs to the DNA polymerase type-B-like family. Homotetramer. Part of a 700kDa complex. Interacts with p45 and p50 RNA ligases. Mg(2+) serves as cofactor. Mn(2+) is required as a cofactor.

It localises to the mitochondrion. The enzyme catalyses RNA(n) + UTP = RNA(n)-3'-uridine ribonucleotide + diphosphate. Its activity is regulated as follows. Zinc-binding is required for catalytic activity. Terminal uridylyltransferase which is involved in the post-transcriptional editing of mitochondrial RNA, a process involving the addition and deletion of uridine (U) nucleotides in the pre-mRNA. Specifically, catalyzes the addition of Us to the 3'-hydroxyl group of guided RNA (gRNA), with a preference for RNAs terminating in 6 Us, but also can add Us to RNAs terminating in 6 adenines (A), 6 cytosines (C), or 6 guanines (G). Can mediate RNA-independent UTP polymerization in vitro. Can mediate pyrophosphate-dependent degradation of synthetic RNA ending with U residues in vitro. The polypeptide is Terminal uridylyltransferase 1 (Leishmania tarentolae (Sauroleishmania tarentolae)).